Here is a 478-residue protein sequence, read N- to C-terminus: MNRDSFYPAIACFPLLLMLAGCAPMHETRQALSQQTPAAQVDTALPTALKNGWPDSQWWLEYHDNQLTSLINNALQSAPDMQVAEQRIQLAEAQAKAVATQDGPQLDFSADMERQKMSAEGLMGPFALNDPAAGTTGPWYTNGTFGLTAGWHLDIWGKNRAEITARLGTVKARAAEREQTRQLLAGSVARLYWEWQTQAALNTVLQQIEKEQNTIIATDRQLYQNGITSSVEGVETDINASKTRQQLNDVAGKMKIIEARLNALTNHQTKSLKLKTVALPKVASQLPDELGYSLLARRADLQAAHWYVESSLSTIDAAKAAFYPDINLMAFLQQDALHLSDLFRHSAQQMGVTAGLTLPIFDSGRLNANLDIAKAESNLSIASYNKAVVEAVNDVARAASQVQTLAEKNQHQAQIERDALRVVGLAQARFNAGLIAGSRVSEARIPALRERANGLLLQGQWLDASIQLTGALGGGYKR.

The N-terminal stretch at 1-21 is a signal peptide; that stretch reads MNRDSFYPAIACFPLLLMLAG. Cys22 carries N-palmitoyl cysteine lipidation. The S-diacylglycerol cysteine moiety is linked to residue Cys22.

It belongs to the outer membrane factor (OMF) (TC 1.B.17) family.

It is found in the cell outer membrane. Functionally, could be involved in resistance to puromycin, acriflavine and tetraphenylarsonium chloride. The sequence is that of Multidrug resistance outer membrane protein MdtQ (mdtQ) from Escherichia coli O6:H1 (strain CFT073 / ATCC 700928 / UPEC).